A 1669-amino-acid polypeptide reads, in one-letter code: Formin-like protein 12 (1669 aa).

Positions R5–L193 constitute a Phosphatase tensin-type domain. C126 serves as the catalytic Phosphocysteine intermediate. The 140-residue stretch at P199–F338 folds into the C2 tensin-type domain. 3 disordered regions span residues Q688 to E709, D1025 to L1240, and I1631 to K1669. Basic and acidic residues predominate over residues L1036–H1050. Pro residues-rich tracts occupy residues P1060 to Q1069, A1098 to I1127, P1136 to R1190, and P1198 to P1230. In terms of domain architecture, FH2 spans N1247–A1646.

Belongs to the formin-like family. Class-II subfamily.

In Oryza sativa subsp. japonica (Rice), this protein is Formin-like protein 12 (FH12).